Reading from the N-terminus, the 363-residue chain is 3-methyl-D-ornithine--L-lysine ligase (363 aa).

ATP is bound at residue Lys10. 11–12 (LQ) provides a ligand contact to L-lysine. ATP is bound by residues Asp31, 49 to 50 (DV), and 72 to 73 (EN). Residue Glu72 coordinates L-lysine. Positions 85–269 (EEFSCPVLFD…LIELLFRAFG (185 aa)) constitute an ATP-grasp domain. ADP contacts are provided by residues Lys104, Lys131, Ser138, and 160 to 163 (EEYV). D-ornithine contacts are provided by residues 169-171 (SLE) and Asp225. Positions 227, 239, and 241 each coordinate Mg(2+). Position 239 (Glu239) interacts with ADP. D-ornithine contacts are provided by residues 243–248 (RFPSQT) and Glu302. Positions 246 and 302 each coordinate L-lysine.

The protein belongs to the PylC family. Requires Mg(2+) as cofactor.

The catalysed reaction is (3R)-3-methyl-D-ornithine + L-lysine + ATP = (3R)-3-methyl-D-ornithyl-N(6)-L-lysine + ADP + phosphate + H(+). The protein operates within amino-acid biosynthesis; L-pyrrolysine biosynthesis. In terms of biological role, is required for the biosynthesis of pyrrolysine. Catalyzes the ATP-dependent ligation between (3R)-3-methyl-D-ornithine and L-lysine, leading to (3R)-3-methyl-D-ornithyl-N6-L-lysine. The protein is 3-methyl-D-ornithine--L-lysine ligase of Methanosarcina acetivorans (strain ATCC 35395 / DSM 2834 / JCM 12185 / C2A).